The chain runs to 435 residues: MTNSKLTETLTFECETGNYHTFCPISCVAWLYQKIEDSFFLVIGTKTCGYFLQNALGVMIFAEPRYAMAELEEADISAQLNDYKELKRLCLQIKQDRNPSVIVWIGTCTTEIIKMDLEGMAPRLEAEIQTPIVVARANGLDYAFTQGEDTVLAAMVQRCPSNAPEQNQIEKKSLVLFGSLPTNVATQLNLELERCGIQVAGWLPSQRYADLPVLNQNVYVCGINPFLSRTATTLMRRRKCKLISAPFPIGPDGTRAWLEKICSVFNVAPINLIERERLIWDSLEDYITLLRGKSVFFMGDNLLEISLARFLVRCGMIVYEIGIPYLDKRFQSAELQLLEKTCSEMNVAMPRIVEKPDNYNQIQRIRELQPDLAITGMAHANPLEARGINTKWSVEFTFAQIHGFTNARDILELVTRPLRRNKALENLGWNQLVKM.

Cys-23, Cys-48, and Cys-108 together coordinate [4Fe-4S] cluster.

The protein belongs to the BchN/ChlN family. As to quaternary structure, protochlorophyllide reductase is composed of three subunits; ChlL, ChlN and ChlB. Forms a heterotetramer of two ChlB and two ChlN subunits. The cofactor is [4Fe-4S] cluster.

It localises to the plastid. The protein localises to the chloroplast. It catalyses the reaction chlorophyllide a + oxidized 2[4Fe-4S]-[ferredoxin] + 2 ADP + 2 phosphate = protochlorophyllide a + reduced 2[4Fe-4S]-[ferredoxin] + 2 ATP + 2 H2O. Its pathway is porphyrin-containing compound metabolism; chlorophyll biosynthesis (light-independent). Its function is as follows. Component of the dark-operative protochlorophyllide reductase (DPOR) that uses Mg-ATP and reduced ferredoxin to reduce ring D of protochlorophyllide (Pchlide) to form chlorophyllide a (Chlide). This reaction is light-independent. The NB-protein (ChlN-ChlB) is the catalytic component of the complex. In Chlorella vulgaris (Green alga), this protein is Light-independent protochlorophyllide reductase subunit N.